The sequence spans 276 residues: Omega-amidase NIT2 (276 aa).

A CN hydrolase domain is found at 4–248 (FRLALIQLQV…ETILYSDIDL (245 aa)). Phosphoserine is present on S26. The active-site Proton acceptor is E43. N6-acetyllysine; alternate is present on K68. An N6-succinyllysine; alternate modification is found at K68. The Proton donor role is filled by K112. Residues K123 and K130 each carry the N6-succinyllysine modification. The active-site Nucleophile is the C153.

The protein belongs to the carbon-nitrogen hydrolase superfamily. NIT1/NIT2 family. As to quaternary structure, homodimer.

Its subcellular location is the cytoplasm. It carries out the reaction a monoamide of a dicarboxylate + H2O = a dicarboxylate + NH4(+). The catalysed reaction is 2-oxoglutaramate + H2O = 2-oxoglutarate + NH4(+). The enzyme catalyses 2-oxosuccinamate + H2O = oxaloacetate + NH4(+). In terms of biological role, has omega-amidase activity. The role of omega-amidase is to remove potentially toxic intermediates by converting 2-oxoglutaramate and 2-oxosuccinamate to biologically useful 2-oxoglutarate and oxaloacetate, respectively. Can also hydrolyze gamma-monomethyl-alpha-ketoglutarate in vitro. This is Omega-amidase NIT2 from Mus musculus (Mouse).